Reading from the N-terminus, the 191-residue chain is Glutathione S-transferase Y-2 (191 aa).

One can recognise a GST N-terminal domain in the interval 2–80 (TFATVYIKPH…YIVAKGSKPE (79 aa)). A GST C-terminal domain is found at 85–191 (TTEERATNTR…VSQHPIIKNM (107 aa)).

This sequence belongs to the GST superfamily.

The catalysed reaction is RX + glutathione = an S-substituted glutathione + a halide anion + H(+). Conjugation of reduced glutathione to a wide number of exogenous and endogenous hydrophobic electrophiles. This chain is Glutathione S-transferase Y-2 (GSTY2), found in Pichia kudriavzevii (Yeast).